A 66-amino-acid chain; its full sequence is Disintegrin EO5B (66 aa).

Positions 1–65 constitute a Disintegrin domain; sequence NSAHPCCDPV…DCPRNPYKGK (65 aa). Intrachain disulfides connect C6–C29, C20–C26, C25–C50, and C38–C57. The Cell attachment site; atypical (VGD) signature appears at 42-44; the sequence is VGD.

It belongs to the disintegrin family. Dimeric disintegrin subfamily. As to quaternary structure, heterodimer with EO4A or EO5A; disulfide-linked. As to expression, expressed by the venom gland.

It localises to the secreted. Its function is as follows. Poor inhibitor of platelet aggregation. When it dimerizes with EO4A, it inhibits the adhesion of cells expressing the RGD-dependent integrin alpha-5/beta-1 (ITGA5/ITGB1) to immobilized fibronectin. When it dimerizes with EO5A, it inhibits the adhesion of the alpha-4/beta-1 (ITGA4/ITGB1) integrin to VCAM-1. When it dimerizes either with EO4A or EO5A, the inhibition on alpha-IIb/beta-3 (ITGA2B/ITGB3) is low. This is Disintegrin EO5B from Echis ocellatus (Ocellated saw-scaled viper).